We begin with the raw amino-acid sequence, 244 residues long: Phosphoribosyl isomerase A (244 aa).

Aspartate 10 functions as the Proton acceptor in the catalytic mechanism. Aspartate 129 (proton donor) is an active-site residue.

This sequence belongs to the HisA/HisF family.

It localises to the cytoplasm. It carries out the reaction 1-(5-phospho-beta-D-ribosyl)-5-[(5-phospho-beta-D-ribosylamino)methylideneamino]imidazole-4-carboxamide = 5-[(5-phospho-1-deoxy-D-ribulos-1-ylimino)methylamino]-1-(5-phospho-beta-D-ribosyl)imidazole-4-carboxamide. It catalyses the reaction N-(5-phospho-beta-D-ribosyl)anthranilate = 1-(2-carboxyphenylamino)-1-deoxy-D-ribulose 5-phosphate. The protein operates within amino-acid biosynthesis; L-histidine biosynthesis; L-histidine from 5-phospho-alpha-D-ribose 1-diphosphate: step 4/9. Its pathway is amino-acid biosynthesis; L-tryptophan biosynthesis; L-tryptophan from chorismate: step 3/5. In terms of biological role, involved in both the histidine and tryptophan biosynthetic pathways. The chain is Phosphoribosyl isomerase A from Mycobacterium ulcerans (strain Agy99).